The primary structure comprises 65 residues: Conotoxin Cal16.1 (65 aa).

Positions 1-19 (MRCLSIFVLLVLLVSFAVA) are cleaved as a signal peptide. A propeptide spanning residues 20–48 (ELDVEGEIVKQLLTRGTLKDADFWKRLEM) is cleaved from the precursor. Residue Q49 is modified to Pyrrolidone carboxylic acid. Disulfide bonds link C51–C60 and C53–C61. Residue E63 is modified to Glutamic acid 1-amide.

As to expression, expressed by the venom duct.

It localises to the secreted. Probable neurotoxin with unknown target. Possibly targets ion channels. This is Conotoxin Cal16.1 from Californiconus californicus (California cone).